The chain runs to 340 residues: Glycerol-3-phosphate dehydrogenase [NAD(P)+] (340 aa).

Ser-14, Tyr-15, His-35, and Lys-109 together coordinate NADPH. Residues Lys-109, Gly-138, and Thr-140 each coordinate sn-glycerol 3-phosphate. Ala-142 serves as a coordination point for NADPH. Lys-194, Asp-247, Ser-257, Arg-258, and Asn-259 together coordinate sn-glycerol 3-phosphate. The Proton acceptor role is filled by Lys-194. Residue Arg-258 participates in NADPH binding. Residues Val-282 and Glu-284 each coordinate NADPH.

The protein belongs to the NAD-dependent glycerol-3-phosphate dehydrogenase family.

The protein localises to the cytoplasm. The catalysed reaction is sn-glycerol 3-phosphate + NAD(+) = dihydroxyacetone phosphate + NADH + H(+). It catalyses the reaction sn-glycerol 3-phosphate + NADP(+) = dihydroxyacetone phosphate + NADPH + H(+). It functions in the pathway membrane lipid metabolism; glycerophospholipid metabolism. Functionally, catalyzes the reduction of the glycolytic intermediate dihydroxyacetone phosphate (DHAP) to sn-glycerol 3-phosphate (G3P), the key precursor for phospholipid synthesis. The protein is Glycerol-3-phosphate dehydrogenase [NAD(P)+] of Photorhabdus laumondii subsp. laumondii (strain DSM 15139 / CIP 105565 / TT01) (Photorhabdus luminescens subsp. laumondii).